Reading from the N-terminus, the 330-residue chain is Aspartate--ammonia ligase (330 aa).

Belongs to the class-II aminoacyl-tRNA synthetase family. AsnA subfamily.

Its subcellular location is the cytoplasm. The catalysed reaction is L-aspartate + NH4(+) + ATP = L-asparagine + AMP + diphosphate + H(+). Its pathway is amino-acid biosynthesis; L-asparagine biosynthesis; L-asparagine from L-aspartate (ammonia route): step 1/1. In Streptococcus pyogenes serotype M1, this protein is Aspartate--ammonia ligase.